The chain runs to 245 residues: Rhamnogalacturonan acetylesterase (245 aa).

The first 17 residues, 1 to 17 (MKSIALTSLSLLPSALA), serve as a signal peptide directing secretion. Catalysis depends on S26, which acts as the Nucleophile. C100 and C108 form a disulfide bridge. Active-site residues include D204 and H207. A disulfide bridge connects residues C226 and C244.

This sequence belongs to the 'GDSL' lipolytic enzyme family.

It localises to the secreted. It catalyses the reaction Hydrolytic cleavage of 2-O-acetyl- or 3-O-acetyl groups of alpha-D-galacturonic acid in rhamnogalacturonan I.. In terms of biological role, plays a key role in the degradation of rhamnogalacturonan in the cell wall. Involved in degradation of pectin. This chain is Rhamnogalacturonan acetylesterase, found in Emericella nidulans (strain FGSC A4 / ATCC 38163 / CBS 112.46 / NRRL 194 / M139) (Aspergillus nidulans).